A 614-amino-acid polypeptide reads, in one-letter code: Replication protein A 70 kDa DNA-binding subunit (614 aa).

The tract at residues 112–178 is disordered; the sequence is GNPVPYNEGQ…SSVKTPGGTQ (67 aa). 2 stretches are compositionally biased toward polar residues: residues 120 to 130 and 158 to 178; these read GQGQQRSSAPT and PSNQ…GGTQ. The OB DNA-binding region spans 194–278; it reads WTICARVTQK…VKNDYEITFN (85 aa). The segment at 478-500 adopts a C4-type zinc-finger fold; that stretch reads CPSQDCNKKVIDQQNGLYRCEKC.

This sequence belongs to the replication factor A protein 1 family. In terms of assembly, component of the heterotrimeric canonical replication protein A complex (RPA).

It is found in the nucleus. Its subcellular location is the PML body. Functionally, as part of the heterotrimeric replication protein A complex (RPA/RP-A), binds and stabilizes single-stranded DNA intermediates, that form during DNA replication or upon DNA stress. It prevents their reannealing and in parallel, recruits and activates different proteins and complexes involved in DNA metabolism. Thereby, it plays an essential role both in DNA replication and the cellular response to DNA damage. The protein is Replication protein A 70 kDa DNA-binding subunit (RPA1) of Gallus gallus (Chicken).